The sequence spans 146 residues: Putative actin-depolymerizing factor 8 (146 aa).

Residues 14-144 (PAWIEVPEKS…DLEVLRGRAN (131 aa)) form the ADF-H domain.

The protein belongs to the actin-binding proteins ADF family.

In terms of biological role, actin-depolymerizing protein. Severs actin filaments (F-actin) and binds to actin monomers. In Oryza sativa subsp. japonica (Rice), this protein is Putative actin-depolymerizing factor 8 (ADF8).